Reading from the N-terminus, the 334-residue chain is Anthranilate phosphoribosyltransferase (334 aa).

5-phospho-alpha-D-ribose 1-diphosphate-binding positions include glycine 79, 82–83, serine 87, 89–92, 107–115, and serine 119; these read GD, NIST, and KAGNRSISS. Glycine 79 contacts anthranilate. Serine 91 lines the Mg(2+) pocket. Asparagine 110 is an anthranilate binding site. Arginine 165 contacts anthranilate. Aspartate 224 and glutamate 225 together coordinate Mg(2+).

Belongs to the anthranilate phosphoribosyltransferase family. As to quaternary structure, homodimer. The cofactor is Mg(2+).

It catalyses the reaction N-(5-phospho-beta-D-ribosyl)anthranilate + diphosphate = 5-phospho-alpha-D-ribose 1-diphosphate + anthranilate. The protein operates within amino-acid biosynthesis; L-tryptophan biosynthesis; L-tryptophan from chorismate: step 2/5. In terms of biological role, catalyzes the transfer of the phosphoribosyl group of 5-phosphorylribose-1-pyrophosphate (PRPP) to anthranilate to yield N-(5'-phosphoribosyl)-anthranilate (PRA). This Streptococcus thermophilus (strain ATCC BAA-250 / LMG 18311) protein is Anthranilate phosphoribosyltransferase.